Here is a 438-residue protein sequence, read N- to C-terminus: Exodeoxyribonuclease 7 large subunit (438 aa).

Residues 406–438 (ATSTGPTDDIPSSAARLPASPAPDARPASGPES) form a disordered region.

This sequence belongs to the XseA family. In terms of assembly, heterooligomer composed of large and small subunits.

It is found in the cytoplasm. It catalyses the reaction Exonucleolytic cleavage in either 5'- to 3'- or 3'- to 5'-direction to yield nucleoside 5'-phosphates.. Its function is as follows. Bidirectionally degrades single-stranded DNA into large acid-insoluble oligonucleotides, which are then degraded further into small acid-soluble oligonucleotides. The sequence is that of Exodeoxyribonuclease 7 large subunit from Clavibacter sepedonicus (Clavibacter michiganensis subsp. sepedonicus).